The chain runs to 310 residues: Membrane protein insertase YidC 2 (310 aa).

Residues 1-23 (MKKTLKRILFSSLSLSILLLLTG) form the signal peptide. Cysteine 24 is lipidated: N-palmitoyl cysteine. The S-diacylglycerol cysteine moiety is linked to residue cysteine 24. Transmembrane regions (helical) follow at residues 33-53 (PYGVIWNTLGVPMANLITYFA), 58-78 (LGFGVAIIIVTIIVRVIILPL), 135-155 (FGGIGCLPLLIQMPFFSAIFF), 180-200 (LTVIIAILYFVQSWLSMQGVP), and 219-239 (VFMSISLPASVALYWFIGGIF). The segment at 262–310 (EYTKNPPKAYKSNNARKDVTSSTKTTESNQAIITSKKTNRNAGKQKRRG) is disordered. The segment covering 281 to 297 (TSSTKTTESNQAIITSK) has biased composition (polar residues). Residues 298 to 310 (KTNRNAGKQKRRG) are compositionally biased toward basic residues.

This sequence belongs to the OXA1/ALB3/YidC family. Type 2 subfamily.

The protein localises to the cell membrane. Its function is as follows. Required for the insertion and/or proper folding and/or complex formation of integral membrane proteins into the membrane. Involved in integration of membrane proteins that insert both dependently and independently of the Sec translocase complex, as well as at least some lipoproteins. The protein is Membrane protein insertase YidC 2 of Streptococcus agalactiae serotype III (strain NEM316).